A 101-amino-acid chain; its full sequence is Large ribosomal subunit protein uL24 (101 aa).

This sequence belongs to the universal ribosomal protein uL24 family. Part of the 50S ribosomal subunit.

Its function is as follows. One of two assembly initiator proteins, it binds directly to the 5'-end of the 23S rRNA, where it nucleates assembly of the 50S subunit. Functionally, one of the proteins that surrounds the polypeptide exit tunnel on the outside of the subunit. In Streptococcus uberis (strain ATCC BAA-854 / 0140J), this protein is Large ribosomal subunit protein uL24.